A 200-amino-acid chain; its full sequence is Small ribosomal subunit protein uS4 (200 aa).

A disordered region spans residues 22–43 (TGKELERRPYAPGQHGPTQRKK). Residues 92–170 (QRLDNIVYRL…VPEYVTFDAE (79 aa)) form the S4 RNA-binding domain.

The protein belongs to the universal ribosomal protein uS4 family. As to quaternary structure, part of the 30S ribosomal subunit. Contacts protein S5. The interaction surface between S4 and S5 is involved in control of translational fidelity.

Its function is as follows. One of the primary rRNA binding proteins, it binds directly to 16S rRNA where it nucleates assembly of the body of the 30S subunit. In terms of biological role, with S5 and S12 plays an important role in translational accuracy. This chain is Small ribosomal subunit protein uS4, found in Listeria innocua serovar 6a (strain ATCC BAA-680 / CLIP 11262).